Reading from the N-terminus, the 110-residue chain is V-type proton ATPase subunit F (110 aa).

Belongs to the V-ATPase F subunit family. In terms of assembly, V-ATPase is a heteromultimeric enzyme made up of two complexes: the ATP-hydrolytic V1 complex and the proton translocation V0 complex. The V1 complex consists of three catalytic AB heterodimers that form a heterohexamer, three peripheral stalks each consisting of EG heterodimers, one central rotor including subunits D and F, and the regulatory subunits C and H. The proton translocation complex V0 consists of the proton transport subunit a, a ring of proteolipid subunits c9c'', rotary subunit d, subunits e and f, and two accessory subunits.

Its function is as follows. Subunit of the V1 complex of vacuolar(H+)-ATPase (V-ATPase), a multisubunit enzyme composed of a peripheral complex (V1) that hydrolyzes ATP and a membrane integral complex (V0) that translocates protons. V-ATPase is responsible for acidifying and maintaining the pH of intracellular compartments and in some cell types, is targeted to the plasma membrane, where it is responsible for acidifying the extracellular environment. This Xenopus laevis (African clawed frog) protein is V-type proton ATPase subunit F (atp6s14).